The following is a 98-amino-acid chain: MSRNELDERIETYYVRVRGVVQGVGFRHATVREAHALKLRGWVANLEDGSVEAMIQGPGAQIDRMLAWLRHGPPAARVTEVTFEERLIERRFDRFQQQ.

One can recognise an Acylphosphatase-like domain in the interval 12-98 (TYYVRVRGVV…ERRFDRFQQQ (87 aa)). Active-site residues include Arg27 and Asn45.

Belongs to the acylphosphatase family.

The catalysed reaction is an acyl phosphate + H2O = a carboxylate + phosphate + H(+). This Burkholderia ambifaria (strain ATCC BAA-244 / DSM 16087 / CCUG 44356 / LMG 19182 / AMMD) (Burkholderia cepacia (strain AMMD)) protein is Acylphosphatase (acyP).